Consider the following 498-residue polypeptide: Aspartyl/glutamyl-tRNA(Asn/Gln) amidotransferase subunit B (498 aa).

It belongs to the GatB/GatE family. GatB subfamily. Heterotrimer of A, B and C subunits.

The catalysed reaction is L-glutamyl-tRNA(Gln) + L-glutamine + ATP + H2O = L-glutaminyl-tRNA(Gln) + L-glutamate + ADP + phosphate + H(+). It carries out the reaction L-aspartyl-tRNA(Asn) + L-glutamine + ATP + H2O = L-asparaginyl-tRNA(Asn) + L-glutamate + ADP + phosphate + 2 H(+). Functionally, allows the formation of correctly charged Asn-tRNA(Asn) or Gln-tRNA(Gln) through the transamidation of misacylated Asp-tRNA(Asn) or Glu-tRNA(Gln) in organisms which lack either or both of asparaginyl-tRNA or glutaminyl-tRNA synthetases. The reaction takes place in the presence of glutamine and ATP through an activated phospho-Asp-tRNA(Asn) or phospho-Glu-tRNA(Gln). The chain is Aspartyl/glutamyl-tRNA(Asn/Gln) amidotransferase subunit B from Caulobacter vibrioides (strain ATCC 19089 / CIP 103742 / CB 15) (Caulobacter crescentus).